The chain runs to 257 residues: Receptor expression-enhancing protein 4 (257 aa).

A run of 2 helical transmembrane segments spans residues 1–21 (MVSW…CPAY) and 42–62 (WIVF…ISWF). S152 and S194 each carry phosphoserine. Residues 183-257 (PIGYRAGGLQ…KKTVPSDVDS (75 aa)) form a disordered region. T196 carries the phosphothreonine modification. Phosphoserine is present on S202. Position 250 is a phosphothreonine (T250). A Phosphoserine modification is found at S253.

The protein belongs to the DP1 family. As to expression, expressed in circumvallate papillae and testis.

Its subcellular location is the endoplasmic reticulum membrane. Functionally, microtubule-binding protein required to ensure proper cell division and nuclear envelope reassembly by sequestering the endoplasmic reticulum away from chromosomes during mitosis. Probably acts by clearing the endoplasmic reticulum membrane from metaphase chromosomes. The polypeptide is Receptor expression-enhancing protein 4 (REEP4) (Homo sapiens (Human)).